A 365-amino-acid chain; its full sequence is MINLGDKQSTIVVAMSGGVDSSAVAAMLHEQGHNVIGITLQLYDHGMAVGKKNACCAGQDIYDAKMVANKLGIPHYVLDYESKFKESVIDNFVDSYLQGETPLPCVQCNKSVKFRDLIKTARELGAAQLATGHYVRKVNGDNGAELHTGLDPAKDQSYFLFTTTKEQLEYLSFPLGGLTKDETRRLASKFGLEVADKPDSQDICFVPDGNYKSVINKIRPGASESGKIIHVNGFELGEHSGIINYTIGQRRGLGIAYNEPLYVVKIDPKDNIVYVGPESALHVQEFIIKNINWLADEIKDNEKLEVEVKIRSTRPPRLAEISKLDDDKMKVKFLSEEKAVAPGQACVIYAGERVLGGGWITRDIR.

ATP-binding positions include 14-21 (AMSGGVDS) and leucine 40. Cysteine 108 serves as the catalytic Nucleophile. An intrachain disulfide couples cysteine 108 to cysteine 204. ATP is bound at residue glycine 132. Residues 154-156 (KDQ) are interaction with tRNA. The active-site Cysteine persulfide intermediate is cysteine 204.

It belongs to the MnmA/TRMU family.

The protein resides in the cytoplasm. It carries out the reaction S-sulfanyl-L-cysteinyl-[protein] + uridine(34) in tRNA + AH2 + ATP = 2-thiouridine(34) in tRNA + L-cysteinyl-[protein] + A + AMP + diphosphate + H(+). Its function is as follows. Catalyzes the 2-thiolation of uridine at the wobble position (U34) of tRNA, leading to the formation of s(2)U34. The sequence is that of tRNA-specific 2-thiouridylase MnmA from Rickettsia felis (strain ATCC VR-1525 / URRWXCal2) (Rickettsia azadi).